A 1226-amino-acid chain; its full sequence is DNA-directed RNA polymerase subunit beta (1226 aa).

This sequence belongs to the RNA polymerase beta chain family. As to quaternary structure, the RNAP catalytic core consists of 2 alpha, 1 beta, 1 beta' and 1 omega subunit. When a sigma factor is associated with the core the holoenzyme is formed, which can initiate transcription.

The catalysed reaction is RNA(n) + a ribonucleoside 5'-triphosphate = RNA(n+1) + diphosphate. DNA-dependent RNA polymerase catalyzes the transcription of DNA into RNA using the four ribonucleoside triphosphates as substrates. The sequence is that of DNA-directed RNA polymerase subunit beta from Leptospira interrogans serogroup Icterohaemorrhagiae serovar copenhageni (strain Fiocruz L1-130).